We begin with the raw amino-acid sequence, 384 residues long: MSSYLFTSESVSEGHPDKIADQISDAVLDEILKQDPKARVACETYVKTGMALVGGEITTSAWVDIENLTRKVICDIGYEHSEMGFDGHSCAVLNAIGKQSADINQGVDRENPLDQGAGDQGIMFGYATNETDVLMPAAITYAHRLMEKQSEVRKSGKLAWLRPDAKSQVTLKYEDNKIVGVDAVVLSTQHSEEVSQKDLHEGVMEEIIKPVLPSEWLSKETKFFINPTGRFVIGGPMGDCGLTGRKIIVDTYGGAARHGGGAFSGKEPSKVDRSAAYAARYVAKNIVAAGLADRCEIQLSYAIGVAEPTSIMVETFGTGKVANELLVSLVREFFDLRPYGLIKMLDLIQPIYRETAAYGHFGREQFPWEKVDRAEDLRIAAGLK.

An ATP-binding site is contributed by His-15. Asp-17 is a Mg(2+) binding site. Glu-43 is a K(+) binding site. 2 residues coordinate L-methionine: Glu-56 and Gln-99. The interval 99-109 is flexible loop; it reads QSADINQGVDR. Residues 164 to 166, 230 to 231, Asp-239, 245 to 246, Ala-262, and Lys-266 each bind ATP; these read DAK, RF, and RK. Residue Asp-239 participates in L-methionine binding. Residue Lys-270 participates in L-methionine binding.

It belongs to the AdoMet synthase family. Homotetramer; dimer of dimers. Mg(2+) is required as a cofactor. Requires K(+) as cofactor.

It localises to the cytoplasm. The enzyme catalyses L-methionine + ATP + H2O = S-adenosyl-L-methionine + phosphate + diphosphate. The protein operates within amino-acid biosynthesis; S-adenosyl-L-methionine biosynthesis; S-adenosyl-L-methionine from L-methionine: step 1/1. In terms of biological role, catalyzes the formation of S-adenosylmethionine (AdoMet) from methionine and ATP. The overall synthetic reaction is composed of two sequential steps, AdoMet formation and the subsequent tripolyphosphate hydrolysis which occurs prior to release of AdoMet from the enzyme. The sequence is that of S-adenosylmethionine synthase from Haemophilus influenzae (strain ATCC 51907 / DSM 11121 / KW20 / Rd).